The following is a 570-amino-acid chain: Phosphoenolpyruvate-protein phosphotransferase (570 aa).

The active-site Tele-phosphohistidine intermediate is the His-189. Phosphoenolpyruvate contacts are provided by Arg-296 and Arg-332. 2 residues coordinate Mg(2+): Glu-431 and Asp-455. Residues Asn-454–Asp-455 and Arg-465 each bind phosphoenolpyruvate. Cys-502 functions as the Proton donor in the catalytic mechanism.

Belongs to the PEP-utilizing enzyme family. As to quaternary structure, homodimer. It depends on Mg(2+) as a cofactor.

The protein resides in the cytoplasm. It carries out the reaction L-histidyl-[protein] + phosphoenolpyruvate = N(pros)-phospho-L-histidyl-[protein] + pyruvate. General (non sugar-specific) component of the phosphoenolpyruvate-dependent sugar phosphotransferase system (sugar PTS). This major carbohydrate active-transport system catalyzes the phosphorylation of incoming sugar substrates concomitantly with their translocation across the cell membrane. Enzyme I transfers the phosphoryl group from phosphoenolpyruvate (PEP) to the phosphoryl carrier protein (HPr). The protein is Phosphoenolpyruvate-protein phosphotransferase (ptsI) of Buchnera aphidicola subsp. Schizaphis graminum (strain Sg).